The primary structure comprises 668 residues: UvrABC system protein B (668 aa).

The Helicase ATP-binding domain maps to arginine 25 to glycine 414. Glycine 38 to threonine 45 provides a ligand contact to ATP. Positions tyrosine 91–isoleucine 114 match the Beta-hairpin motif. A Helicase C-terminal domain is found at aspartate 431–leucine 594. The UVR domain maps to lysine 627–glutamine 662.

Belongs to the UvrB family. Forms a heterotetramer with UvrA during the search for lesions. Interacts with UvrC in an incision complex.

It is found in the cytoplasm. Functionally, the UvrABC repair system catalyzes the recognition and processing of DNA lesions. A damage recognition complex composed of 2 UvrA and 2 UvrB subunits scans DNA for abnormalities. Upon binding of the UvrA(2)B(2) complex to a putative damaged site, the DNA wraps around one UvrB monomer. DNA wrap is dependent on ATP binding by UvrB and probably causes local melting of the DNA helix, facilitating insertion of UvrB beta-hairpin between the DNA strands. Then UvrB probes one DNA strand for the presence of a lesion. If a lesion is found the UvrA subunits dissociate and the UvrB-DNA preincision complex is formed. This complex is subsequently bound by UvrC and the second UvrB is released. If no lesion is found, the DNA wraps around the other UvrB subunit that will check the other stand for damage. The protein is UvrABC system protein B of Treponema pallidum (strain Nichols).